A 693-amino-acid chain; its full sequence is MKGRLLDAVPLSSLTGVGAALSNKLAKINLHTVQDLLLHLPLRYEDRTHLYPIGELLPGVYATVEGEVLNCNISFGSRRMMTCQISDGSGILTMRFFNFNAAMKNSLATGRRVLAYGEAKRGKYGAEMIHPEYRVQGDLSTPELQETLTPVYPTTEGVKQATLRKLTDQALDLLDTCAIEELLPPELSQGMMTLPEALRTLHRPPPTLQLSDLETGQHPAQRRLILEELLAHNLSMLALRAGAQRFHAQPLSANDALKNKLLAALPFKPTGAQARVVAEIERDMALDVPMMRLVQGDVGSGKTLVAALAALRAVAHGKQVALMAPTELLAEQHANNFRNWFAPLGIEVGWLAGKQKGKARLAQQEAIASGQVQMIVGTHAIFQEQVQFNGLALVIIDEQHRFGVHQRLALWEKGQQQGFHPHQLIMTATPIPRTLAMTAYADLDTSVIDELPPGRTPVTTVAIPDTRRIDIIDRVRHACMTEGRQAYWVCTLIEESELLEAQAAEATWEELKLALPELNVGLVHGRMKPAEKQAVMTSFKQGELHLLVATTVIEVGVDVPNASLMIIENPERLGLAQLHQLRGRVGRGAVASHCVLLYKTPLSKTAQIRLQVLRDSNDGFVIAQKDLEIRGPGELLGTRQTGNAEFKVADLLRDQAMIPEVQRLARHIHERYPQQAKALIERWMPETERYSNA.

Residues 48 to 146 form a wedge domain region; it reads THLYPIGELL…GDLSTPELQE (99 aa). In terms of domain architecture, Helicase ATP-binding spans 283-448; the sequence is DMALDVPMMR…AYADLDTSVI (166 aa). Residue 296-303 coordinates ATP; it reads GDVGSGKT. Positions 397-400 match the DEAH box motif; sequence DEQH. In terms of domain architecture, Helicase C-terminal spans 482-628; the sequence is EGRQAYWVCT…GFVIAQKDLE (147 aa).

This sequence belongs to the helicase family. RecG subfamily. Monomer.

The enzyme catalyses Couples ATP hydrolysis with the unwinding of duplex DNA by translocating in the 3'-5' direction.. It carries out the reaction ATP + H2O = ADP + phosphate + H(+). Functionally, plays a critical role in recombination and DNA repair. Helps process Holliday junction intermediates to mature products by catalyzing branch migration. Has replication fork regression activity, unwinds stalled or blocked replication forks to make a HJ that can be resolved. Has a DNA unwinding activity characteristic of a DNA helicase with 3'-5' polarity. Plays a role in recovery after DNA ADP-ribosylation. In Escherichia coli O127:H6 (strain E2348/69 / EPEC), this protein is ATP-dependent DNA helicase RecG.